A 215-amino-acid chain; its full sequence is Ribulose-phosphate 3-epimerase (215 aa).

Ser-13 lines the substrate pocket. A divalent metal cation is bound by residues His-38, Asp-40, His-69, and Asp-175. Asp-40 serves as the catalytic Proton acceptor. Substrate contacts are provided by residues His-69, 175-177 (DGG), and 196-197 (GS). Residue Asp-175 is the Proton donor of the active site.

It belongs to the ribulose-phosphate 3-epimerase family. A divalent metal cation serves as cofactor.

It carries out the reaction D-ribulose 5-phosphate = D-xylulose 5-phosphate. The protein operates within carbohydrate degradation. Functionally, catalyzes the reversible epimerization of D-ribulose 5-phosphate to D-xylulose 5-phosphate. The protein is Ribulose-phosphate 3-epimerase of Mycoplasma pneumoniae (strain ATCC 29342 / M129 / Subtype 1) (Mycoplasmoides pneumoniae).